A 394-amino-acid chain; its full sequence is Putative 8-amino-7-oxononanoate synthase (394 aa).

Residue arginine 21 participates in substrate binding. 107 to 108 (GY) lines the pyridoxal 5'-phosphate pocket. Position 132 (histidine 132) interacts with substrate. Pyridoxal 5'-phosphate is bound by residues serine 180, 205–208 (DEAH), and 236–239 (TLSK). The residue at position 239 (lysine 239) is an N6-(pyridoxal phosphate)lysine. Residue threonine 361 participates in substrate binding.

Belongs to the class-II pyridoxal-phosphate-dependent aminotransferase family. BioF subfamily. As to quaternary structure, homodimer. Requires pyridoxal 5'-phosphate as cofactor.

It carries out the reaction 6-carboxyhexanoyl-[ACP] + L-alanine + H(+) = (8S)-8-amino-7-oxononanoate + holo-[ACP] + CO2. Its pathway is cofactor biosynthesis; biotin biosynthesis. Catalyzes the decarboxylative condensation of pimeloyl-[acyl-carrier protein] and L-alanine to produce 8-amino-7-oxononanoate (AON), [acyl-carrier protein], and carbon dioxide. The sequence is that of Putative 8-amino-7-oxononanoate synthase (bioF) from Acaryochloris marina (strain MBIC 11017).